The chain runs to 448 residues: Solute carrier family 52, riboflavin transporter, member 2 (448 aa).

5 helical membrane-spanning segments follow: residues 14–34 (LLVALLGMGSWAAVNGIWVEL), 47–67 (LPSYLSVVVALGNLGLLVVTL), 79–99 (VPIQVVQVLSVVGTALLAPLW), 105–125 (VAGQLHSVAFLTLALVLALAC), and 147–167 (FFLGQGLSALLPCVLALVQGV). N-linked (GlcNAc...) asparagine glycosylation occurs at asparagine 178. A helical transmembrane segment spans residues 198-218 (WALTALLVTSAAAFQGLLLLL). Positions 228–267 (GAGPELPLGSPGAEEEEKEEEEALPLQEPPSQAAGTIPGP) are disordered. A compositionally biased stretch (acidic residues) spans 240–250 (AEEEEKEEEEA). 5 consecutive transmembrane segments (helical) span residues 280–300 (AFLLGLLAITSALTNGVLPAV), 315–335 (LAVVLGSAANPLACFLAMGVL), 342–362 (LVGLSLLGMLFGAYLMVLAIL), 369–389 (VGTTAGVVLVVLSWVLCLCVF), and 407–427 (ALLAAGVAIQMGSLLGAGTMF).

It belongs to the riboflavin transporter family.

The protein resides in the cell membrane. It carries out the reaction riboflavin(in) = riboflavin(out). Its activity is regulated as follows. Riboflavin transport is Na(+)-independent but moderately pH-sensitive. Activity is strongly inhibited by riboflavin analogs, such as lumiflavin. Weakly inhibited by flavin adenine dinucleotide (FAD) and flavin mononucleotide (FMN). Its function is as follows. Plasma membrane transporter mediating the uptake by cells of the water soluble vitamin B2/riboflavin that plays a key role in biochemical oxidation-reduction reactions of the carbohydrate, lipid, and amino acid metabolism. May also act as a receptor for 4-hydroxybutyrate. Functionally, (Microbial infection) In case of infection by retroviruses, acts as a cell receptor to retroviral envelopes similar to the porcine endogenous retrovirus (PERV-A). The polypeptide is Solute carrier family 52, riboflavin transporter, member 2 (SLC52A2) (Papio hamadryas (Hamadryas baboon)).